The following is a 122-amino-acid chain: Toxin CSTX-1 (122 aa).

The N-terminal stretch at 1–20 is a signal peptide; sequence MKVLIISAVLFITIFSNISA. Positions 21 to 47 are excised as a propeptide; sequence EIEDDFLEDESFEAEDIIPFFENEQAR. Intrachain disulfides connect C49-C64, C56-C73, C63-C91, and C75-C89. Residues 99–112 form a predicted alpha-helix region; that stretch reads AIETGLNIFRGLFK. R108 bears the Arginine amide; in CSTX-2a mark. K121 bears the Lysine amide; in omega-ctenitoxin-Cs1a mark.

This sequence belongs to the neurotoxin 19 (CSTX) family. 04 (U1-Lctx) subfamily. In terms of assembly, monomer. Interacts with CSTX-13 (AC P83919) (Kd=430 nM), but does not interact with CSTX-9 (AC P58604). As to expression, expressed by the venom gland.

It localises to the secreted. It is found in the target cell membrane. Spider venom toxin that shows calcium channel blocking activity and exhibits cytolytic activity by affecting the outer leaflet curvature and/or pore formation across the membrane. It blocks L-type calcium channels (Cav1/CACNA1) in mammalian neurons at nanomolar concentrations. Furthermore, it produces a slow voltage-independent block of mid/low and high voltage-activated calcium channels in cockroach neurons. Potassium ions, histamine, M-ctenitoxin-Cs1a (AC P83619), CSTX-9 (AC P58604), and CSTX-13 (AC P83919) synergistically increase the insecticidal activity of this toxin. In vivo, it causes paralysis in blow flies and provokes death in drosophila. Its function is as follows. Blocks voltage-activated calcium channels (Cav). Does not induce cell membrane permeability increase when tested on Xenopus oocytes. No alpha-helical structures are detectable. Is 7-fold less neurotoxic than omega-ctenitoxin-Cs1a on drosophila flies. In terms of biological role, blocks voltage-activated calcium channels (Cav). Is 190-fold less neurotoxic than omega-ctenitoxin-Cs1a on drosophila flies. The polypeptide is Toxin CSTX-1 (Cupiennius salei (American wandering spider)).